The primary structure comprises 491 residues: Protein phosphatase ppm-1.G (491 aa).

The region spanning 23-486 is the PPM-type phosphatase domain; that stretch reads SYACTTMQGW…DNMTVICTTF (464 aa). Mn(2+) contacts are provided by Asp-57 and Gly-58. Basic and acidic residues predominate over residues 112-125; the sequence is KDIGDEGKPKKAGG. Disordered regions lie at residues 112–136 and 170–294; these read KDIG…ADRI and GDVS…EEMV. 2 stretches are compositionally biased toward acidic residues: residues 173–192 and 260–294; these read SDDS…QDDT and ATEE…EEMV. Mn(2+)-binding residues include Asp-428 and Asp-477.

The protein belongs to the PP2C family. Mg(2+) serves as cofactor. The cofactor is Mn(2+).

It catalyses the reaction O-phospho-L-seryl-[protein] + H2O = L-seryl-[protein] + phosphate. The enzyme catalyses O-phospho-L-threonyl-[protein] + H2O = L-threonyl-[protein] + phosphate. The chain is Protein phosphatase ppm-1.G from Caenorhabditis elegans.